A 363-amino-acid chain; its full sequence is Autophagy-related protein 3 (363 aa).

2 stretches are compositionally biased toward basic and acidic residues: residues 84 to 106 (DFAGDAGHDETVVRDGEDFRGDG) and 129 to 138 (ARVRDVRTVD). Residues 84–171 (DFAGDAGHDE…DDEAIIRDPK (88 aa)) are flexible region. The disordered stretch occupies residues 84–174 (DFAGDAGHDE…AIIRDPKADN (91 aa)). Positions 139–164 (ESGEMGEREDDEDDIPDMEDDDDDDE) are enriched in acidic residues. Residue Cys247 is the Glycyl thioester intermediate of the active site. The interval 251 to 339 (SVMKTLLDRA…EEEVAIRVDQ (89 aa)) is handle region.

Belongs to the ATG3 family. Monomer. Interacts with atg8 through an intermediate thioester bond through the C-terminal Gly of atg8. Interacts with the C-terminal region of the E1-like atg7 enzyme. Also interacts with the atg12-atg5 conjugate.

The protein localises to the cytoplasm. Its function is as follows. E2 conjugating enzyme required for the cytoplasm to vacuole transport (Cvt) and autophagy. Required for selective autophagic degradation of the nucleus (nucleophagy) as well as for mitophagy which contributes to regulate mitochondrial quantity and quality by eliminating the mitochondria to a basal level to fulfill cellular energy requirements and preventing excess ROS production. Responsible for the E2-like covalent binding of phosphatidylethanolamine to the C-terminal Gly of atg8. The atg12-atg5 conjugate plays a role of an E3 and promotes the transfer of atg8 from atg3 to phosphatidylethanolamine (PE). This step is required for the membrane association of atg8. The formation of the atg8-phosphatidylethanolamine conjugate is essential for autophagy and for the cytoplasm to vacuole transport (Cvt). The atg8-PE conjugate mediates tethering between adjacent membranes and stimulates membrane hemifusion, leading to expansion of the autophagosomal membrane during autophagy. Required for normal mycelial growth and conidiogenesis, and regulates sclerotial formation. Plays an essential role in pathogenesis. This is Autophagy-related protein 3 from Botryotinia fuckeliana (strain BcDW1) (Noble rot fungus).